Reading from the N-terminus, the 527-residue chain is Calcium and calcium/calmodulin-dependent serine/threonine-protein kinase (527 aa).

In terms of domain architecture, Protein kinase spans 12-314; the sequence is YEVSEILGRG…AQELLSDPWV (303 aa). 18–26 is an ATP binding site; it reads LGRGGFSVV. Positions 25-51 are disordered; sequence VVRKGTRKSNNDDEKSQSQSKSQSQSQ. Positions 41–51 are enriched in low complexity; the sequence is QSQSKSQSQSQ. Residue Lys-55 coordinates ATP. The segment at 59–78 is disordered; it reads RLGTSNNLPRKKDGGENSTE. The active-site Proton acceptor is the Asp-179. A helical membrane pass occupies residues 239 to 255; the sequence is MWSLGVILYILLSGYPP. Thr-279 carries the post-translational modification Phosphothreonine. The interval 337 to 350 is calmodulin-binding; it reads ARRKLRAAAIASVW. Residues 358 to 379 are a coiled coil; sequence TKKLKSLVGSYDLKEDEIENLR. EF-hand domains lie at 408–443, 444–479, and 486–521; these read SLIP…LKNS, KGED…LPYD, and TEPG…DSSL. Ca(2+) contacts are provided by Asp-421, Asn-423, Asp-425, Thr-427, Glu-432, Asp-457, Asp-459, Ser-461, Cys-463, Glu-468, Asp-499, Asn-501, Asp-503, Lys-505, and Glu-510.

Belongs to the protein kinase superfamily. CAMK Ser/Thr protein kinase family. CaMK subfamily. In terms of processing, autophosphorylation.

The protein localises to the membrane. It catalyses the reaction L-seryl-[protein] + ATP = O-phospho-L-seryl-[protein] + ADP + H(+). It carries out the reaction L-threonyl-[protein] + ATP = O-phospho-L-threonyl-[protein] + ADP + H(+). Activated by calcium. Autophosphorylation may play an important role in the regulation of the kinase activity. In terms of biological role, protein kinase that recognizes the calcium spiking induced by Nod factors and translates this signal to components controlling nodulation and mycorrhizal infection responses. This Pisum sativum (Garden pea) protein is Calcium and calcium/calmodulin-dependent serine/threonine-protein kinase (SYM9).